Reading from the N-terminus, the 558-residue chain is Glutamine--tRNA ligase (558 aa).

The 'HIGH' region signature appears at 36–46 (PEPNGYLHIGH). ATP-binding positions include 37–39 (EPN) and 43–49 (HIGHAKS). L-glutamine-binding residues include Asp69 and Tyr214. ATP-binding positions include Thr233, 263 to 264 (RL), and 271 to 273 (LSK). The 'KMSKS' region motif lies at 270 to 274 (LLSKR).

Belongs to the class-I aminoacyl-tRNA synthetase family. Monomer.

The protein resides in the cytoplasm. The enzyme catalyses tRNA(Gln) + L-glutamine + ATP = L-glutaminyl-tRNA(Gln) + AMP + diphosphate. In Bradyrhizobium diazoefficiens (strain JCM 10833 / BCRC 13528 / IAM 13628 / NBRC 14792 / USDA 110), this protein is Glutamine--tRNA ligase.